The chain runs to 585 residues: Arginine--tRNA ligase (585 aa).

The 'HIGH' region signature appears at 131 to 141 (ANPTGPMHVGH).

This sequence belongs to the class-I aminoacyl-tRNA synthetase family. Monomer.

It is found in the cytoplasm. It catalyses the reaction tRNA(Arg) + L-arginine + ATP = L-arginyl-tRNA(Arg) + AMP + diphosphate. In Brucella melitensis biotype 1 (strain ATCC 23456 / CCUG 17765 / NCTC 10094 / 16M), this protein is Arginine--tRNA ligase.